The sequence spans 272 residues: uncharacterized protein (272 aa).

Lys185 (schiff-base intermediate with substrate) is an active-site residue.

Belongs to the DeoC/FbaB aldolase family.

This is an uncharacterized protein from Saccharolobus solfataricus (strain ATCC 35092 / DSM 1617 / JCM 11322 / P2) (Sulfolobus solfataricus).